Reading from the N-terminus, the 1475-residue chain is Sterol 3-beta-glucosyltransferase (1475 aa).

Disordered stretches follow at residues 1–73 (MPPP…PPMF) and 94–218 (HDRF…EDDK). A compositionally biased stretch (low complexity) spans 8–17 (LPLHGPAGAA). The segment covering 30–40 (RVGKKLQKKRH) has biased composition (basic residues). The segment covering 108–118 (GPQRDSADRSH) has biased composition (basic and acidic residues). Over residues 156–168 (EKHKRKISGHKLL) the composition is skewed to basic residues. In terms of domain architecture, GRAM 1 spans 270–315 (QDIFEFDQPEAVIEEYPCWLLQSVLLQGYMYITAKHICFYSYLPKK). Residues 318-413 (EVVKSGYLSK…WVKSLQRVIF (96 aa)) form the PH domain. 3 disordered regions span residues 492-541 (ARLK…TTNK), 594-636 (SSPR…MEEP), and 653-715 (QILR…PVTP). The span at 505–531 (QQQQQQHPMQPPMQASARSSMSGSRRA) shows a compositional bias: low complexity. Polar residues-rich tracts occupy residues 621–634 (QQGS…SSME) and 653–674 (QILR…SASR). Positions 675–686 (TEVEKQQRRDPR) are enriched in basic and acidic residues. A GRAM 2 domain is found at 798-901 (RFRAHFALPE…RDDCAVTLLQ (104 aa)). Residues Ser989, Arg990, Asp992, Ala1293, His1295, His1308, Ser1311, Gly1312, Thr1313, Asp1332, and Gln1333 each coordinate UDP-alpha-D-glucose. The tract at residues 1413 to 1475 (IQVEPDEDEE…RVSPSQQSVA (63 aa)) is disordered. A compositionally biased stretch (acidic residues) spans 1416-1425 (EPDEDEESAE).

Belongs to the glycosyltransferase 28 family.

It localises to the cytoplasm. Its subcellular location is the preautophagosomal structure membrane. The catalysed reaction is a sterol + UDP-alpha-D-glucose = a sterol 3-beta-D-glucoside + UDP + H(+). It carries out the reaction ergosterol + UDP-alpha-D-glucose = ergosteryl 3-beta-D-glucoside + UDP + H(+). Sterol glycosyltransferase responsible for the glycosylation of ergosterol to form ergosterol-glucoside. Mediates autophagic degradation of peroxisomes (pexophagy) and is involved in pathogenesis via peroxisome degradation inside appressoria that are developing into the host invasion stage. In Glomerella lagenarium (Anthracnose fungus), this protein is Sterol 3-beta-glucosyltransferase.